Reading from the N-terminus, the 364-residue chain is Lipoyl synthase, mitochondrial (364 aa).

The disordered stretch occupies residues Pro34–Tyr53. Positions 99, 104, 110, 130, 134, 137, and 345 each coordinate [4Fe-4S] cluster. In terms of domain architecture, Radical SAM core spans Glu115–Leu334.

The protein belongs to the radical SAM superfamily. Lipoyl synthase family. Requires [4Fe-4S] cluster as cofactor.

Its subcellular location is the mitochondrion. It carries out the reaction [[Fe-S] cluster scaffold protein carrying a second [4Fe-4S](2+) cluster] + N(6)-octanoyl-L-lysyl-[protein] + 2 oxidized [2Fe-2S]-[ferredoxin] + 2 S-adenosyl-L-methionine + 4 H(+) = [[Fe-S] cluster scaffold protein] + N(6)-[(R)-dihydrolipoyl]-L-lysyl-[protein] + 4 Fe(3+) + 2 hydrogen sulfide + 2 5'-deoxyadenosine + 2 L-methionine + 2 reduced [2Fe-2S]-[ferredoxin]. Its pathway is protein modification; protein lipoylation via endogenous pathway; protein N(6)-(lipoyl)lysine from octanoyl-[acyl-carrier-protein]: step 2/2. Catalyzes the radical-mediated insertion of two sulfur atoms into the C-6 and C-8 positions of the octanoyl moiety bound to the lipoyl domains of lipoate-dependent enzymes, thereby converting the octanoylated domains into lipoylated derivatives. This chain is Lipoyl synthase, mitochondrial, found in Drosophila grimshawi (Hawaiian fruit fly).